Consider the following 342-residue polypeptide: Nicotinate-nucleotide--dimethylbenzimidazole phosphoribosyltransferase (342 aa).

The active-site Proton acceptor is Glu311.

Belongs to the CobT family.

The catalysed reaction is 5,6-dimethylbenzimidazole + nicotinate beta-D-ribonucleotide = alpha-ribazole 5'-phosphate + nicotinate + H(+). It functions in the pathway nucleoside biosynthesis; alpha-ribazole biosynthesis; alpha-ribazole from 5,6-dimethylbenzimidazole: step 1/2. In terms of biological role, catalyzes the synthesis of alpha-ribazole-5'-phosphate from nicotinate mononucleotide (NAMN) and 5,6-dimethylbenzimidazole (DMB). This chain is Nicotinate-nucleotide--dimethylbenzimidazole phosphoribosyltransferase, found in Vibrio vulnificus (strain CMCP6).